The sequence spans 286 residues: Outer kinetochore KNL1 complex subunit ZWINT (286 aa).

Positions 85–211 form a coiled coil; sequence SRQKALEAKE…EKDKLQRHQT (127 aa). The disordered stretch occupies residues 230 to 286; sequence AEIPQELDLPKDKLQQVTQPQEQNTQDTMGREADNPQPVGDAGLPWLPGRQQHKEES. Positions 244–255 are enriched in low complexity; sequence QQVTQPQEQNTQ.

Component of the KNL1 complex composed of KNL1 and ZWINT. Part of the ten-subunit outer kinetochore KMN network that includes the KNL1, MIS12 and NDC80 complexes; a bioriented kinetochore contains approximately 150 copies of the network. Interacts with the MIS12 complex subunits MIS12 DSN1, and PMF1. Interacts with the NDC80 complex subunit NDC80 during mitosis. Interacts with ZW10. Interacts with CETN3.

The protein localises to the nucleus. It localises to the chromosome. Its subcellular location is the centromere. It is found in the kinetochore. Its function is as follows. Acts as a component of the outer kinetochore KNL1 complex that serves as a docking point for spindle assembly checkpoint components and mediates microtubule-kinetochore interactions. Kinetochores, consisting of a centromere-associated inner segment and a microtubule-contacting outer segment, play a crucial role in chromosome segregation by mediating the physical connection between centromeric DNA and spindle microtubules. The outer kinetochore is made up of the ten-subunit KMN network, comprising the MIS12, NDC80 and KNL1 complexes, and auxiliary microtubule-associated components; together they connect the outer kinetochore with the inner kinetochore, bind microtubules, and mediate interactions with mitotic checkpoint proteins that delay anaphase until chromosomes are bioriented on the spindle. Targets the RZZ complex to the kinetochore at prometaphase. Recruits MAD2L1 to the kinetochore, but is not required for BUB1B localization. In addition to orienting mitotic chromosomes, it is also essential for alignment of homologous chromosomes during meiotic metaphase I. In meiosis I, required to activate the spindle assembly checkpoint at unattached kinetochores to correct erroneous kinetochore-microtubule attachments. The sequence is that of Outer kinetochore KNL1 complex subunit ZWINT (ZWINT) from Bos taurus (Bovine).